We begin with the raw amino-acid sequence, 423 residues long: MSKKKLQTIQAPKGVPDYIPPVSPEFLGVRDTFAHQAHLAGYEHIELPIFEDTTLFARGVGESTDVVTKEMYTFADRGDRSVTLRPEGTAGVMRAVIEHNLDRGQLPVKLNYYGPFFRYERPQAGRYRQLQQVGVEAIGVDDPALDAEVIALADRSLKVIGLTGYRLELTSLGDHTCRPQYREKLQEFLFKLPLDEETRHRAEINPLRVLDDKRPEIQEMTVDAPLMLDNLSDSSREHFELVTGMLDDLNVAYVVNPRMVRGLDYYTKTTFEFVHDGLGAQSGIGGGGRYDGLMAQLGGQELSGIGYALGVDRCLLALEAEQKRVTDGSRVNVFGVAMGSAAKREMVRIIDALRSAGISADMAYGDRGLKGAMKGADRAGARFALVLGDRELENNCVAVKDLAQQGQRDVSLDNLILEIQSAL.

Belongs to the class-II aminoacyl-tRNA synthetase family. In terms of assembly, homodimer.

It localises to the cytoplasm. The enzyme catalyses tRNA(His) + L-histidine + ATP = L-histidyl-tRNA(His) + AMP + diphosphate + H(+). This is Histidine--tRNA ligase from Corynebacterium diphtheriae (strain ATCC 700971 / NCTC 13129 / Biotype gravis).